Here is a 65-residue protein sequence, read N- to C-terminus: Small ribosomal subunit protein eS27 (65 aa).

Zn(2+)-binding residues include Cys20, Cys23, Cys39, and Cys42. The C4-type zinc-finger motif lies at 20 to 42; the sequence is CIDCGNEQIVFSHPATPVRCLVC.

Belongs to the eukaryotic ribosomal protein eS27 family. As to quaternary structure, part of the 30S ribosomal subunit. Zn(2+) serves as cofactor.

This chain is Small ribosomal subunit protein eS27, found in Thermococcus kodakarensis (strain ATCC BAA-918 / JCM 12380 / KOD1) (Pyrococcus kodakaraensis (strain KOD1)).